The sequence spans 210 residues: Dephospho-CoA kinase (210 aa).

The DPCK domain occupies 4–202 (WVGLTGGIGS…AFYSGIFASK (199 aa)). Residue 12–17 (GSGKSA) coordinates ATP.

The protein belongs to the CoaE family.

Its subcellular location is the cytoplasm. The enzyme catalyses 3'-dephospho-CoA + ATP = ADP + CoA + H(+). It functions in the pathway cofactor biosynthesis; coenzyme A biosynthesis; CoA from (R)-pantothenate: step 5/5. Functionally, catalyzes the phosphorylation of the 3'-hydroxyl group of dephosphocoenzyme A to form coenzyme A. This Neisseria gonorrhoeae (strain ATCC 700825 / FA 1090) protein is Dephospho-CoA kinase.